Reading from the N-terminus, the 559-residue chain is Spermidine/putrescine import ATP-binding protein PotA (559 aa).

The region spanning 7–448 is the ABC transporter domain; sequence IEIEGLNKTF…PKTEWIANFI (442 aa). 40–47 is an ATP binding site; it reads GPSGCGKT. Residues 108–317 form an insert region; that stretch reads WTKLDEIPKL…EAFEKRYLSR (210 aa).

This sequence belongs to the ABC transporter superfamily. Spermidine/putrescine importer (TC 3.A.1.11.1) family. As to quaternary structure, the complex is composed of two ATP-binding proteins (PotA), two transmembrane proteins (PotB and PotC) and a solute-binding protein (PotD).

Its subcellular location is the cell membrane. The enzyme catalyses ATP + H2O + polyamine-[polyamine-binding protein]Side 1 = ADP + phosphate + polyamineSide 2 + [polyamine-binding protein]Side 1.. Functionally, part of the ABC transporter complex PotABCD involved in spermidine/putrescine import. Responsible for energy coupling to the transport system. The chain is Spermidine/putrescine import ATP-binding protein PotA from Mycoplasma genitalium (strain ATCC 33530 / DSM 19775 / NCTC 10195 / G37) (Mycoplasmoides genitalium).